We begin with the raw amino-acid sequence, 122 residues long: Small ribosomal subunit protein uS13 (122 aa).

The tract at residues 97–122 is disordered; that stretch reads PVRGQRTKTNARTRKGPARTVAGKKK.

Belongs to the universal ribosomal protein uS13 family. Part of the 30S ribosomal subunit. Forms a loose heterodimer with protein S19. Forms two bridges to the 50S subunit in the 70S ribosome.

Its function is as follows. Located at the top of the head of the 30S subunit, it contacts several helices of the 16S rRNA. In the 70S ribosome it contacts the 23S rRNA (bridge B1a) and protein L5 of the 50S subunit (bridge B1b), connecting the 2 subunits; these bridges are implicated in subunit movement. Contacts the tRNAs in the A and P-sites. The protein is Small ribosomal subunit protein uS13 of Geobacter metallireducens (strain ATCC 53774 / DSM 7210 / GS-15).